The sequence spans 338 residues: Methionine import ATP-binding protein MetN 1 (338 aa).

Residues 2 to 241 (IELHQVSKSF…AKHATTKRFV (240 aa)) enclose the ABC transporter domain. Residue 38-45 (GYSGAGKS) coordinates ATP.

This sequence belongs to the ABC transporter superfamily. Methionine importer (TC 3.A.1.24) family. As to quaternary structure, the complex is composed of two ATP-binding proteins (MetN), two transmembrane proteins (MetI) and a solute-binding protein (MetQ).

The protein resides in the cell membrane. It catalyses the reaction L-methionine(out) + ATP + H2O = L-methionine(in) + ADP + phosphate + H(+). The catalysed reaction is D-methionine(out) + ATP + H2O = D-methionine(in) + ADP + phosphate + H(+). Part of the ABC transporter complex MetNIQ involved in methionine import. Responsible for energy coupling to the transport system. This is Methionine import ATP-binding protein MetN 1 from Listeria monocytogenes serotype 4b (strain F2365).